We begin with the raw amino-acid sequence, 1436 residues long: DNA-directed RNA polymerase subunit beta' (1436 aa).

The Zn(2+) site is built by cysteine 70, cysteine 72, cysteine 85, and cysteine 88. Mg(2+) contacts are provided by aspartate 481, aspartate 483, and aspartate 485. Zn(2+) is bound by residues cysteine 829, cysteine 903, cysteine 910, and cysteine 913.

The protein belongs to the RNA polymerase beta' chain family. As to quaternary structure, the RNAP catalytic core consists of 2 alpha, 1 beta, 1 beta' and 1 omega subunit. When a sigma factor is associated with the core the holoenzyme is formed, which can initiate transcription. Requires Mg(2+) as cofactor. Zn(2+) is required as a cofactor.

It catalyses the reaction RNA(n) + a ribonucleoside 5'-triphosphate = RNA(n+1) + diphosphate. DNA-dependent RNA polymerase catalyzes the transcription of DNA into RNA using the four ribonucleoside triphosphates as substrates. In Flavobacterium johnsoniae (strain ATCC 17061 / DSM 2064 / JCM 8514 / BCRC 14874 / CCUG 350202 / NBRC 14942 / NCIMB 11054 / UW101) (Cytophaga johnsonae), this protein is DNA-directed RNA polymerase subunit beta'.